A 307-amino-acid polypeptide reads, in one-letter code: MFRQRSIQNLVRTIGVGVHSGRRVELTLRPAEANTGIVFHRVDLPQVVDLPASAIGVGDTRMASVLQQGNVRVSTVEHLMSALAGLGIDNLHVDLTAEEVPIMDGSAATFVYLLRSAGIVEQNAPKRFIRVLKPIEVREGEGRNEKWARLEPHEGFALAFSIDFRHPAIDSTANFAEIDFATHSYVREIARARTFGFVNEVEALRSMGLARGGSLDNAIVMDEFRVLNSDGLRYDDEFVKHKILDAIGDLYLLGKPLVARYVAYKSGHALNNQLARALLEQQDAWELVTYESQAEAPQAFRHEWKLA.

H78, H241, and D245 together coordinate Zn(2+). H268 serves as the catalytic Proton donor.

The protein belongs to the LpxC family. Zn(2+) serves as cofactor.

It catalyses the reaction a UDP-3-O-[(3R)-3-hydroxyacyl]-N-acetyl-alpha-D-glucosamine + H2O = a UDP-3-O-[(3R)-3-hydroxyacyl]-alpha-D-glucosamine + acetate. Its pathway is glycolipid biosynthesis; lipid IV(A) biosynthesis; lipid IV(A) from (3R)-3-hydroxytetradecanoyl-[acyl-carrier-protein] and UDP-N-acetyl-alpha-D-glucosamine: step 2/6. Its function is as follows. Catalyzes the hydrolysis of UDP-3-O-myristoyl-N-acetylglucosamine to form UDP-3-O-myristoylglucosamine and acetate, the committed step in lipid A biosynthesis. The sequence is that of UDP-3-O-acyl-N-acetylglucosamine deacetylase from Bordetella bronchiseptica (strain ATCC BAA-588 / NCTC 13252 / RB50) (Alcaligenes bronchisepticus).